Consider the following 483-residue polypeptide: MNYYLGIDCGGTFIKAALFDKTGKMFSCVRENVQVISEQAGYAERDMDELWQIFARVIRQTIERSQVSPQHIKGIGISAQGKGAFLLDQENKPLGRGILSSDQRALTLVKQWQEQGIPEQLYPHTRQTLWTGHPVSILRWLKEHEPERYQRIGSILMSHDYLRFCLTGELHCEETNISESNLYNIHSGQYDPKLAELLGLEGIIAKLPPVIAANQIAGYVTPKAAELTGLAVGTAVVGGLFDVVSTALCAGLDDETKLNAVLGTWSVVSGVTQHIDQQQTLPFVYGCYAEAGKFIVHEASPTSAGNLEWFVKQWHLDYAHINQHVASLEPASSSVLFVPFLYGSNAGLGMQACFYGMQAHHTQAHLLQAIYEGVLFSLMHHLERMRKRFPQANLLRVTGGPTKSPIWLQMLADFTGMRLEIPQIEETGCLGAALMAMQGVNESADVFQAQSMLHVEPNPAYFAAYQAKYQRYQQLTTALKAML.

This sequence belongs to the FGGY kinase family. As to quaternary structure, homodimer.

It catalyses the reaction L-xylulose + ATP = L-xylulose 5-phosphate + ADP + H(+). In Pasteurella multocida (strain Pm70), this protein is Probable L-xylulose kinase (lyx).